The following is a 157-amino-acid chain: MSSDRPIVLAAIIGAHGLQGEVRLKLFTEDMGAYRTLDGAGRSFTLKTIRPGPNGAVARFAEIGDRNAAEALRGTELSVPRSALPPLAPGEYYHVDLIGLPCLVDGAPVGVAAMVEDFGAGDVLEIEKPDGKRFMVPVAKAVTIEPDRLLIDPEFVE.

The 68-residue stretch at 89–156 folds into the PRC barrel domain; it reads PGEYYHVDLI…DRLLIDPEFV (68 aa).

Belongs to the RimM family. In terms of assembly, binds ribosomal protein uS19.

The protein resides in the cytoplasm. In terms of biological role, an accessory protein needed during the final step in the assembly of 30S ribosomal subunit, possibly for assembly of the head region. Essential for efficient processing of 16S rRNA. May be needed both before and after RbfA during the maturation of 16S rRNA. It has affinity for free ribosomal 30S subunits but not for 70S ribosomes. In Rhizorhabdus wittichii (strain DSM 6014 / CCUG 31198 / JCM 15750 / NBRC 105917 / EY 4224 / RW1) (Sphingomonas wittichii), this protein is Ribosome maturation factor RimM.